The following is a 3425-amino-acid chain: Genome polyprotein (3425 aa).

The interaction with host EXOC1 stretch occupies residues 3–16; the sequence is NKKPGRPGSGRVVN. The hydrophobic; homodimerization of capsid protein C stretch occupies residues 38-73; sequence VLRGAGPIRFVLALLTFFKFTALRPTIGMLKRWKLV. Positions 105-120 are cleaved as a propeptide — ER anchor for the capsid protein C, removed in mature form by serine protease NS3; that stretch reads GGSCSWIIMLLPIVAG. Residues 105 to 125 form a helical membrane-spanning segment; sequence GGSCSWIIMLLPIVAGLKLGN. Residue asparagine 135 is glycosylated (N-linked (GlcNAc...) asparagine; by host). Transmembrane regions (helical) follow at residues 247–267 and 273–293; these read WALR…NLGT and IIFT…CLGM. 6 disulfides stabilise this stretch: cysteine 290–cysteine 317, cysteine 347–cysteine 403, cysteine 361–cysteine 392, cysteine 379–cysteine 408, cysteine 477–cysteine 575, and cysteine 592–cysteine 623. The fusion peptide stretch occupies residues 385–398; the sequence is DRGWGNGCGLFGKG. The next 2 membrane-spanning stretches (helical) occupy residues 740 to 760 and 768 to 788; these read LFGG…LWMG and ISMT…NVNA. A disulfide bridge connects residues cysteine 792 and cysteine 803. Residues asparagine 918, asparagine 963, and asparagine 995 are each glycosylated (N-linked (GlcNAc...) asparagine; by host). 4 cysteine pairs are disulfide-bonded: cysteine 967–cysteine 1011, cysteine 1068–cysteine 1117, cysteine 1079–cysteine 1100, and cysteine 1101–cysteine 1104. Transmembrane regions (helical) follow at residues 1138 to 1158, 1169 to 1189, 1214 to 1234, 1290 to 1310, 1337 to 1357, 1369 to 1389, and 1395 to 1415; these read VMAF…VMIV, TAPI…FGGI, IVHL…IGFL, FALP…IDVV, MLLG…FAGL, WPVS…GGIA, and SMAI…VTGF. Positions 1421-1460 are interacts with and activates NS3 protease; the sequence is LEKASDISWSEEARVTGASQRFDVEIDQDGNMRLLNDPGV. One can recognise a Peptidase S7 domain in the interval 1499-1676; the sequence is GGVIWDVPAP…EKKEEEVPQV (178 aa). Active-site charge relay system; for serine protease NS3 activity residues include histidine 1549, aspartate 1573, and serine 1633. Residues 1679–1835 form the Helicase ATP-binding domain; sequence ENMLRKRQLT…DSNSPITDIE (157 aa). Residues 1683-1686 are important for RNA-binding; the sequence is RKRQ. Position 1692–1699 (1692–1699) interacts with ATP; the sequence is LHPGSGKT. The DEAH box signature appears at 1783–1786; that stretch reads DEAH. Residues 1845 to 2011 form the Helicase C-terminal domain; the sequence is SGYEWITDFQ…GLVAQLYGPE (167 aa). The regulates the ATPase activity of NS3 helicase stretch occupies residues 2162–2166; the sequence is EELPE. 8 helical membrane-spanning segments follow: residues 2169–2189, 2194–2214, 2216–2236, 2252–2272, 2306–2326, 2334–2354, 2371–2391, and 2441–2461; these read ETFL…LFFV, LGKT…LWIA, VPAQ…IVLI, VFMI…MGWL, AWAA…HLII, LMAM…MPFV, FTMT…AFLV, and CVLV…LTLT. One can recognise an mRNA cap 0-1 NS5-type MT domain in the interval 2521 to 2786; sequence GGGTGRTLGE…DVDLGSGTRA (266 aa). Serine 2576 contacts S-adenosyl-L-methionine. Position 2576 is a phosphoserine (serine 2576). Lysine 2581 acts as the For 2'-O-MTase activity in catalysis. S-adenosyl-L-methionine-binding residues include glycine 2606, tryptophan 2607, threonine 2624, lysine 2625, and valine 2652. The active-site For 2'-O-MTase activity is aspartate 2666. Isoleucine 2667 contributes to the S-adenosyl-L-methionine binding site. Active-site for 2'-O-MTase activity residues include lysine 2702 and glutamate 2738. Tyrosine 2740 serves as a coordination point for S-adenosyl-L-methionine. Zn(2+) is bound by residues glutamate 2960, histidine 2964, cysteine 2969, and cysteine 2972. In terms of domain architecture, RdRp catalytic spans 3050-3202; it reads GLMYADDTAG…KPADDRFATA (153 aa). Zn(2+)-binding residues include histidine 3237, cysteine 3253, and cysteine 3372. The PDZ-binding signature appears at 3423 to 3425; the sequence is GVL.

In the N-terminal section; belongs to the class I-like SAM-binding methyltransferase superfamily. mRNA cap 0-1 NS5-type methyltransferase family. As to quaternary structure, homodimer. In terms of assembly, forms heterodimers with envelope protein E in the endoplasmic reticulum and Golgi. Homodimer; in the endoplasmic reticulum and Golgi. Interacts with protein prM. Interacts with non-structural protein 1. As to quaternary structure, homodimer; Homohexamer when secreted. Interacts with envelope protein E. NS1 interacts with NS4B. Interacts with host MAVS (via C-terminus); this interaction blocks the interaction of MAVS with RIGI or IFIH1/MDA5. In terms of assembly, interacts (via N-terminus) with serine protease NS3. Forms a heterodimer with serine protease NS3. May form homooligomers. As to quaternary structure, forms a heterodimer with NS2B. Interacts with non-structural protein 2A (via N-terminus). Interacts with NS4B. Interacts with unphosphorylated RNA-directed RNA polymerase NS5; this interaction stimulates RNA-directed RNA polymerase NS5 guanylyltransferase activity. In terms of assembly, interacts with serine protease NS3. Homodimer. Post-translationally, specific enzymatic cleavages in vivo yield mature proteins. Cleavages in the lumen of endoplasmic reticulum are performed by host signal peptidase, whereas cleavages in the cytoplasmic side are performed by serine protease NS3. Signal cleavage at the 2K-4B site requires a prior NS3 protease-mediated cleavage at the 4A-2K site. Both NS2A and NS2B proteins are required in cis for NS2A/2B proteolytic processing. In terms of processing, cleaved in post-Golgi vesicles by a host furin, releasing the mature small envelope protein M, and peptide pr. This cleavage is incomplete as up to 30% of viral particles still carry uncleaved prM. N-glycosylated. Post-translationally, N-glycosylated. The excreted form is glycosylated and this is required for efficient secretion of the protein from infected cells. In terms of processing, phosphorylated on serines residues. This phosphorylation may trigger NS5 nuclear localization.

Its subcellular location is the virion. The protein resides in the host nucleus. It localises to the host cytoplasm. The protein localises to the host perinuclear region. It is found in the secreted. Its subcellular location is the virion membrane. The protein resides in the host endoplasmic reticulum membrane. The catalysed reaction is Selective hydrolysis of -Xaa-Xaa-|-Yaa- bonds in which each of the Xaa can be either Arg or Lys and Yaa can be either Ser or Ala.. It carries out the reaction RNA(n) + a ribonucleoside 5'-triphosphate = RNA(n+1) + diphosphate. The enzyme catalyses a ribonucleoside 5'-triphosphate + H2O = a ribonucleoside 5'-diphosphate + phosphate + H(+). It catalyses the reaction ATP + H2O = ADP + phosphate + H(+). The catalysed reaction is a 5'-end (5'-triphosphoguanosine)-ribonucleoside in mRNA + S-adenosyl-L-methionine = a 5'-end (N(7)-methyl 5'-triphosphoguanosine)-ribonucleoside in mRNA + S-adenosyl-L-homocysteine. It carries out the reaction a 5'-end (N(7)-methyl 5'-triphosphoguanosine)-ribonucleoside in mRNA + S-adenosyl-L-methionine = a 5'-end (N(7)-methyl 5'-triphosphoguanosine)-(2'-O-methyl-ribonucleoside) in mRNA + S-adenosyl-L-homocysteine + H(+). Its function is as follows. Capsid protein self-assembles to form an icosahedral capsid about 40 nm in diameter. Plays a role in virus budding by binding to the cell membrane and gathering the viral RNA into a nucleocapsid that forms the core of a mature virus particle. In terms of biological role, prevents premature fusion activity of envelope proteins in trans-Golgi by binding to envelope protein E at pH6.0. After virion release in extracellular space, gets dissociated from E dimers. Acts as a chaperone for envelope protein E during intracellular virion assembly by masking and inactivating envelope protein E fusion peptide. prM is the only viral peptide matured by host furin in the trans-Golgi network probably to avoid catastrophic activation of the viral fusion activity in acidic Golgi compartment prior to virion release. prM-E cleavage is inefficient, and many virions are only partially matured. These uncleaved prM would play a role in immune evasion. Functionally, may play a role in virus budding. Exerts cytotoxic effects by activating a mitochondrial apoptotic pathway through M ectodomain. May display a viroporin activity. Its function is as follows. Binds to host cell surface receptor and mediates fusion between viral and cellular membranes. Envelope protein is synthesized in the endoplasmic reticulum in the form of heterodimer with protein prM. They play a role in virion budding in the ER, and the newly formed immature particle is covered with 60 spikes composed of heterodimer between precursor prM and envelope protein E. The virion is transported to the Golgi apparatus where the low pH causes dissociation of PrM-E heterodimers and formation of E homodimers. In terms of biological role, involved in immune evasion, pathogenesis and viral replication. Interacts with host MAVS and blocks MAVS binding to RIGI or IFIH1/MDA5, thereby leading to evasion of the innate immune response. Once cleaved off the polyprotein, is targeted to three destinations: the viral replication cycle, the plasma membrane and the extracellular compartment. Essential for viral replication. Required for formation of the replication complex and recruitment of other non-structural proteins to the ER-derived membrane structures. Excreted as a hexameric lipoparticle that plays a role against host immune response. Component of the viral RNA replication complex that functions in virion assembly. Functionally, required cofactor for the serine protease function of NS3. May have membrane-destabilizing activity and form viroporins. Its function is as follows. Displays three enzymatic activities: serine protease, NTPase and RNA helicase. NS3 serine protease, in association with NS2B, performs its autocleavage and cleaves the polyprotein at dibasic sites in the cytoplasm: C-prM, NS2A-NS2B, NS2B-NS3, NS3-NS4A, NS4A-2K and NS4B-NS5. NS3 RNA helicase binds RNA and unwinds dsRNA in the 3' to 5' direction. In terms of biological role, regulates the ATPase activity of the NS3 helicase activity. NS4A allows NS3 helicase to conserve energy during unwinding. Functions as a signal peptide for NS4B. Functionally, induces the formation of ER-derived membrane vesicles where the viral replication takes place. Its function is as follows. Replicates the viral (+) and (-) RNA genome, and performs the capping of genomes in the cytoplasm. NS5 methylates viral RNA cap at guanine N-7 and ribose 2'-O positions. This Anas (ducks) protein is Genome polyprotein.